The primary structure comprises 327 residues: Cytochrome f (327 aa).

Positions 1–24 (MKRIGLVFCALLLLLGMGARPAAA) are cleaved as a signal peptide. Heme contacts are provided by Y25, C45, C48, and H49. A helical membrane pass occupies residues 293-313 (VKWLVAFLAAITITQVLLVLK).

The protein belongs to the cytochrome f family. The 4 large subunits of the cytochrome b6-f complex are cytochrome b6, subunit IV (17 kDa polypeptide, PetD), cytochrome f and the Rieske protein, while the 4 small subunits are PetG, PetL, PetM and PetN. The complex functions as a dimer. Heme serves as cofactor.

The protein localises to the cellular thylakoid membrane. Component of the cytochrome b6-f complex, which mediates electron transfer between photosystem II (PSII) and photosystem I (PSI), cyclic electron flow around PSI, and state transitions. This chain is Cytochrome f, found in Synechococcus sp. (strain JA-2-3B'a(2-13)) (Cyanobacteria bacterium Yellowstone B-Prime).